The sequence spans 221 residues: Probable septum site-determining protein MinC (221 aa).

The protein belongs to the MinC family. In terms of assembly, interacts with MinD and FtsZ.

Cell division inhibitor that blocks the formation of polar Z ring septums. Rapidly oscillates between the poles of the cell to destabilize FtsZ filaments that have formed before they mature into polar Z rings. Prevents FtsZ polymerization. The chain is Probable septum site-determining protein MinC from Shewanella woodyi (strain ATCC 51908 / MS32).